A 338-amino-acid polypeptide reads, in one-letter code: L-serine dehydratase (338 aa).

Lysine 39 is modified (N6-(pyridoxal phosphate)lysine).

This sequence belongs to the serine/threonine dehydratase family. Pyridoxal 5'-phosphate is required as a cofactor.

Its subcellular location is the cytoplasm. The catalysed reaction is L-serine = pyruvate + NH4(+). It functions in the pathway carbohydrate biosynthesis; gluconeogenesis. The protein is L-serine dehydratase (SDL1) of Saccharomyces cerevisiae (strain AWRI1631) (Baker's yeast).